The following is a 652-amino-acid chain: O-fucosyltransferase 15 (652 aa).

Residues 91-111 form a helical; Signal-anchor for type II membrane protein membrane-spanning segment; that stretch reads TAAFVIVLVGFFIFVNWFMLS. Residues Asn-139, Asn-169, and Asn-251 are each glycosylated (N-linked (GlcNAc...) asparagine). 426 to 428 provides a ligand contact to substrate; it reads HLR. N-linked (GlcNAc...) asparagine glycans are attached at residues Asn-464, Asn-546, and Asn-607.

Belongs to the glycosyltransferase GT106 family.

The protein resides in the membrane. It functions in the pathway glycan metabolism. This is O-fucosyltransferase 15 from Arabidopsis thaliana (Mouse-ear cress).